A 1302-amino-acid polypeptide reads, in one-letter code: Regulator of telomere elongation helicase 1 (1302 aa).

Residues 7 to 297 (NGVTVDFPFQ…TKTAQQGEPH (291 aa)) form the Helicase ATP-binding domain. ATP is bound at residue 42–49 (SHTGTGKT). Positions 146, 164, 173, and 208 each coordinate [4Fe-4S] cluster. A Nuclear localization signal motif is present at residues 152-168 (KKQESNHIQIHLCRKKV). The DEAH box signature appears at 251 to 254 (DEAH). Residues 758 to 767 (PAPAPRATAP) show a composition bias toward low complexity. The tract at residues 758–819 (PAPAPRATAP…AAGDPESSLC (62 aa)) is disordered. Residues 770–780 (REGEDAVREVK) show a composition bias toward basic and acidic residues. A Nuclear localization signal motif is present at residues 873-879 (PRGGRKK). Disordered stretches follow at residues 981 to 1006 (RPEH…APDP), 1019 to 1058 (DPRE…GKQG), 1134 to 1153 (CTDL…PQEE), and 1160 to 1234 (VLTH…QAAG). Positions 1178 to 1187 (KTQSKISSLL) are enriched in polar residues. Residues 1180 to 1187 (QSKISSLL) carry the PIP-box motif.

It belongs to the helicase family. RAD3/XPD subfamily. Interacts with TERF1. Interacts (via PIP-box) with PCNA; the interaction is direct and essential for suppressing telomere fragility. Interacts with MMS19; the interaction mediates the association of RTEL1 with the cytosolic iron-sulfur protein assembly (CIA) complex.

The protein resides in the nucleus. The enzyme catalyses ATP + H2O = ADP + phosphate + H(+). Functionally, a probable ATP-dependent DNA helicase implicated in telomere-length regulation, DNA repair and the maintenance of genomic stability. Acts as an anti-recombinase to counteract toxic recombination and limit crossover during meiosis. Regulates meiotic recombination and crossover homeostasis by physically dissociating strand invasion events and thereby promotes noncrossover repair by meiotic synthesis dependent strand annealing (SDSA) as well as disassembly of D loop recombination intermediates. Also disassembles T loops and prevents telomere fragility by counteracting telomeric G4-DNA structures, which together ensure the dynamics and stability of the telomere. The sequence is that of Regulator of telomere elongation helicase 1 from Pongo abelii (Sumatran orangutan).